The sequence spans 576 residues: Arginine--tRNA ligase (576 aa).

Residues 122 to 132 carry the 'HIGH' region motif; the sequence is PNVAKEMHVGH.

The protein belongs to the class-I aminoacyl-tRNA synthetase family. Monomer.

The protein localises to the cytoplasm. It carries out the reaction tRNA(Arg) + L-arginine + ATP = L-arginyl-tRNA(Arg) + AMP + diphosphate. The protein is Arginine--tRNA ligase of Erwinia tasmaniensis (strain DSM 17950 / CFBP 7177 / CIP 109463 / NCPPB 4357 / Et1/99).